The sequence spans 349 residues: UDP-N-acetylenolpyruvoylglucosamine reductase (349 aa).

An FAD-binding PCMH-type domain is found at 24 to 197; sequence FGIDATARFA…VAVTFRLPKR (174 aa). The active site involves R173. S249 serves as the catalytic Proton donor. E345 is an active-site residue.

Belongs to the MurB family. It depends on FAD as a cofactor.

The protein resides in the cytoplasm. The catalysed reaction is UDP-N-acetyl-alpha-D-muramate + NADP(+) = UDP-N-acetyl-3-O-(1-carboxyvinyl)-alpha-D-glucosamine + NADPH + H(+). The protein operates within cell wall biogenesis; peptidoglycan biosynthesis. Functionally, cell wall formation. This chain is UDP-N-acetylenolpyruvoylglucosamine reductase, found in Burkholderia ambifaria (strain MC40-6).